The chain runs to 355 residues: Peptide chain release factor 1 (355 aa).

Residue Gln-233 is modified to N5-methylglutamine.

This sequence belongs to the prokaryotic/mitochondrial release factor family. Methylated by PrmC. Methylation increases the termination efficiency of RF1.

The protein resides in the cytoplasm. Its function is as follows. Peptide chain release factor 1 directs the termination of translation in response to the peptide chain termination codons UAG and UAA. This chain is Peptide chain release factor 1, found in Caldicellulosiruptor saccharolyticus (strain ATCC 43494 / DSM 8903 / Tp8T 6331).